Here is a 507-residue protein sequence, read N- to C-terminus: Putative propionyl-CoA carboxylase beta chain (507 aa).

Positions 1–25 are enriched in basic and acidic residues; sequence MNEHMDHFYTKRKQAEEGGGREKLA. Residues 1–30 form a disordered region; that stretch reads MNEHMDHFYTKRKQAEEGGGREKLAQQRQK. The 254-residue stretch at 1–254 folds into the CoA carboxyltransferase N-terminal domain; sequence MNEHMDHFYT…NGRTTEPKPE (254 aa). Positions 1–501 are carboxyltransferase; the sequence is MNEHMDHFYT…HKTEERPKKK (501 aa). The CoA carboxyltransferase C-terminal domain occupies 256–501; the sequence is EASRPLLNRL…HKTEERPKKK (246 aa).

Belongs to the AccD/PCCB family. As to quaternary structure, probably a dodecamer composed of six biotin-containing alpha subunits and six beta subunits.

It carries out the reaction propanoyl-CoA + hydrogencarbonate + ATP = (S)-methylmalonyl-CoA + ADP + phosphate + H(+). It participates in metabolic intermediate metabolism; propanoyl-CoA degradation; succinyl-CoA from propanoyl-CoA: step 1/3. The sequence is that of Putative propionyl-CoA carboxylase beta chain (yqjD) from Bacillus subtilis (strain 168).